A 663-amino-acid chain; its full sequence is Transketolase 2 (663 aa).

His25 is a binding site for substrate. Thiamine diphosphate-binding positions include His65 and 113-115; that span reads GPL. Residue Asp154 coordinates Mg(2+). The thiamine diphosphate site is built by Gly155 and Asn184. Positions 184 and 186 each coordinate Mg(2+). His259, Arg356, and Ser383 together coordinate substrate. His259 serves as a coordination point for thiamine diphosphate. Glu410 acts as the Proton donor in catalysis. Phe436 is a binding site for thiamine diphosphate. Substrate contacts are provided by His460, Asp468, and Arg519.

The protein belongs to the transketolase family. Homodimer. Mg(2+) serves as cofactor. It depends on Ca(2+) as a cofactor. Requires Mn(2+) as cofactor. The cofactor is Co(2+). Thiamine diphosphate is required as a cofactor.

It carries out the reaction D-sedoheptulose 7-phosphate + D-glyceraldehyde 3-phosphate = aldehydo-D-ribose 5-phosphate + D-xylulose 5-phosphate. Catalyzes the transfer of a two-carbon ketol group from a ketose donor to an aldose acceptor, via a covalent intermediate with the cofactor thiamine pyrophosphate. The sequence is that of Transketolase 2 (tkt2) from Vibrio parahaemolyticus serotype O3:K6 (strain RIMD 2210633).